The primary structure comprises 315 residues: Putative olfactory receptor 2I1 (315 aa).

The Extracellular segment spans residues 1 to 24 (MKANYSAEERFLLLGFSDWPSLQP). The chain crosses the membrane as a helical span at residues 25–48 (VLFALVLLCYLLTLTGNSALVLLA). Over 49-56 (VRDPRLHT) the chain is Cytoplasmic. The chain crosses the membrane as a helical span at residues 57-78 (PMYYFLCHLALVDAGFTTSVVP). Over 79–99 (PLLANLRGPALWLPRSHCTAQ) the chain is Extracellular. A disulfide bridge links Cys96 with Cys188. A helical transmembrane segment spans residues 100-119 (LCASLALGSAECVLLAVMAL). Over 120–138 (DRAAAVCRPLRYAGLVSPR) the chain is Cytoplasmic. The chain crosses the membrane as a helical span at residues 139 to 157 (LCRTLASASWLSGLTNSVA). Residues 158–195 (QTALLAERPLCAPRLLDHFICELPALLKLACGGDGDTT) are Extracellular-facing. The chain crosses the membrane as a helical span at residues 196 to 219 (ENQMFAARVVILLLPFAVILASYG). At 220-236 (AVARAVCCMRFSGGRRR) the chain is on the cytoplasmic side. Residues 237–259 (AVGTCGSHLTAVCLFYGSAIYTY) traverse the membrane as a helical segment. Residues 260-272 (LQPAQRYNQARGK) lie on the Extracellular side of the membrane. Residues 273-292 (FVSLFYTVVTPALNPLIYTL) traverse the membrane as a helical segment. Residues 293–315 (RNKKVKGAARRLLRSLGRGQAGQ) lie on the Cytoplasmic side of the membrane.

Belongs to the G-protein coupled receptor 1 family.

It localises to the cell membrane. Functionally, odorant receptor. The polypeptide is Putative olfactory receptor 2I1 (Homo sapiens (Human)).